The sequence spans 185 residues: MISSNDFRTGTTIELDGSVWRVVEFLHVKPGKGSAFVRTKLKNAQTGSVVEKTFRAGETVPQATLEKRTMQHTYKDGDQYVFMDMETYEEARLNPEQMGTSVNYLKEEMEADIVFWGDQVLEVQLPTSVILEVTETDPGVKGDTATGGTKPAIVETGAQVMVPLFISIGEKIKVDTRDGSYLGRE.

This sequence belongs to the elongation factor P family.

Its subcellular location is the cytoplasm. It functions in the pathway protein biosynthesis; polypeptide chain elongation. Involved in peptide bond synthesis. Stimulates efficient translation and peptide-bond synthesis on native or reconstituted 70S ribosomes in vitro. Probably functions indirectly by altering the affinity of the ribosome for aminoacyl-tRNA, thus increasing their reactivity as acceptors for peptidyl transferase. The protein is Elongation factor P of Rippkaea orientalis (strain PCC 8801 / RF-1) (Cyanothece sp. (strain PCC 8801)).